The chain runs to 624 residues: Kelch-like ECH-associated protein 1 (624 aa).

Residue cysteine 38 is modified to S-(2-succinyl)cysteine. One can recognise a BTB domain in the interval 77–149; it reads CDVTLQVKYQ…AYTASISMGE (73 aa). Arginine 135 is covalently cross-linked (N5-[4-(S-L-cysteinyl)-5-methyl-1H-imidazol-2-yl]-L-ornithine (Arg-Cys) (interchain with C-151 in KEAP1)). Cysteine 151 carries the post-translational modification S-(2,3-dicarboxypropyl)cysteine; alternate. Cysteine 151 carries the S-(2-succinyl)cysteine; alternate modification. Residue cysteine 151 is modified to S-nitrosocysteine; alternate. Residue cysteine 151 forms an N5-[4-(S-L-cysteinyl)-5-methyl-1H-imidazol-2-yl]-L-ornithine (Cys-Arg) (interchain with R-135 in KEAP1) linkage. A BACK domain is found at 184–286; it reads AIGIANFAEQ…TPNFLQMQLQ (103 aa). Cysteine 241 bears the S-(2-succinyl)cysteine mark. Residues cysteine 257 and cysteine 273 each carry the S-(2,3-dicarboxypropyl)cysteine modification. Cysteine 288 carries the S-(2,3-dicarboxypropyl)cysteine; alternate modification. Cysteine 288 carries the post-translational modification S-(2-succinyl)cysteine; alternate. Cysteine 319 is subject to S-(2-succinyl)cysteine. Kelch repeat units follow at residues 327 to 372, 373 to 423, 424 to 470, 471 to 517, 518 to 564, and 565 to 611; these read LIYT…VVGG, LLYA…VIDG, HIYA…VLNR, LLYA…VLHN, CIYA…VHQG, and RIYV…VTME. Cysteine 434 bears the S-cGMP-cysteine mark. The residue at position 613 (cysteine 613) is an S-(2-succinyl)cysteine.

The protein belongs to the KEAP1 family. As to quaternary structure, component of the BCR(KEAP1) E3 ubiquitin ligase complex, at least composed of 2 molecules of CUL3, 2 molecules of KEAP1, and RBX1. Interacts with NFE2L2/NRF2; the interaction is direct. Forms a ternary complex with NFE2L2/NRF2 and PGAM5. Interacts with (phosphorylated) SQSTM1/p62; the interaction is direct and inactivates the BCR(KEAP1) complex by sequestering it in inclusion bodies, promoting its degradation. Interacts with NFE2L1. Interacts with BPTF and PTMA. Interacts with MAP1LC3B. Interacts indirectly with ENC1. Interacts with SESN1 and SESN2. Interacts with HSP90AA1 and HSP90AB1. Interacts with PGCKA1; this interaction prevents the ubiquitination of KEAP1 by TRIM25, thus protecting KEAP1 from degradation. In terms of assembly, (Microbial infection) Interacts with ebolavirus protein VP24; this interaction activates transcription factor NFE2L2/NRF2 by blocking its interaction with KEAP1. In terms of processing, non-enzymatic covalent modifications of reactive cysteines by electrophile metabolites inactivate the BCR(KEAP1) complex. Accumulation of fumarate promotes the formation of cysteine S-succination (S-(2-succinyl)cysteine), leading to inactivate the BCR(KEAP1) complex and promote NFE2L2/NRF2 nuclear accumulation and activation. Nitric oxide-dependent 8-Nitro-cGMP formation promotes cysteine guanylation (S-cGMP-cysteine), leading to NFE2L2/NRF2 nuclear accumulation and activation. Itaconate, an anti-inflammatory metabolite generated in response to lipopolysaccharide, alkylates cysteines, activating NFE2L2/NRF2. Methylglyoxal, a reactive metabolite that accumulates when the glycolytic enzyme PGK1 is inhibited, promotes formation of a methylimidazole cross-link between proximal Cys-151 and Arg-135 on another KEAP1 molecule, resulting in an inactive dimer that inactivates the BCR(KEAP1) complex. Degraded via a proteasomal-independent process during selective autophagy: interaction with phosphorylated SQSTM1/p62 sequesters KEAP1 in inclusion bodies, leading to its degradation. Post-translationally, auto-ubiquitinated by the BCR(KEAP1) complex. Quinone-induced oxidative stress, but not sulforaphane, increases its ubiquitination. Ubiquitination and subsequent degradation is most pronounced following prolonged exposure of cells to oxidative stress, particularly in glutathione-deficient cells that are highly susceptible to oxidative stress. Deubiquitinated by USP25; leading to stabilization. Ubiquitinated by TRIM25; leading to degradation upon ER stress. As to expression, broadly expressed, with highest levels in skeletal muscle.

Its subcellular location is the cytoplasm. It localises to the nucleus. It participates in protein modification; protein ubiquitination. Ubiquitin ligase activity of the BCR(KEAP1) complex is inhibited by oxidative stress and electrophile metabolites such as sulforaphane. Electrophile metabolites react with reactive cysteine residues in KEAP1 and trigger non-enzymatic covalent modifications of these cysteine residues, leading to inactivate the ubiquitin ligase activity of the BCR(KEAP1) complex. Selective autophagy also inactivates the BCR(KEAP1) complex via interaction between KEAP1 and SQSTM1/p62, which sequesters the complex in inclusion bodies and promotes its degradation. In terms of biological role, substrate-specific adapter of a BCR (BTB-CUL3-RBX1) E3 ubiquitin ligase complex that regulates the response to oxidative stress by targeting NFE2L2/NRF2 for ubiquitination. KEAP1 acts as a key sensor of oxidative and electrophilic stress: in normal conditions, the BCR(KEAP1) complex mediates ubiquitination and degradation of NFE2L2/NRF2, a transcription factor regulating expression of many cytoprotective genes. In response to oxidative stress, different electrophile metabolites trigger non-enzymatic covalent modifications of highly reactive cysteine residues in KEAP1, leading to inactivate the ubiquitin ligase activity of the BCR(KEAP1) complex, promoting NFE2L2/NRF2 nuclear accumulation and expression of phase II detoxifying enzymes. In response to selective autophagy, KEAP1 is sequestered in inclusion bodies following its interaction with SQSTM1/p62, leading to inactivation of the BCR(KEAP1) complex and activation of NFE2L2/NRF2. The BCR(KEAP1) complex also mediates ubiquitination of SQSTM1/p62, increasing SQSTM1/p62 sequestering activity and degradation. The BCR(KEAP1) complex also targets BPTF and PGAM5 for ubiquitination and degradation by the proteasome. The chain is Kelch-like ECH-associated protein 1 from Homo sapiens (Human).